The sequence spans 152 residues: Avidin (152 aa).

A signal peptide spans 1-24 (MVHATSPLLLLLLLSLALVAPGLS). Residues 26-149 (RKCSLTGKWT…GINIFTRLRT (124 aa)) enclose the Avidin-like domain. An intrachain disulfide couples C28 to C107. N41 is a glycosylation site (N-linked (GlcNAc...) asparagine). Y57 serves as a coordination point for biotin.

This sequence belongs to the avidin/streptavidin family. As to quaternary structure, homotetramer. Post-translationally, N-linked glycan at Asn-41 consists of GlcNAc(beta1-2)Man(alpha1-3)[GlcNAc(beta1-4)][Man(alpha1-?)Man(alpha1-6)] Man(beta1-4)GlcNAc(beta1-4)GlcNAc. Synthesized in hen oviduct and concentrated in egg white (where it represents 0.05% of the total protein).

Its subcellular location is the secreted. In terms of biological role, the biological function of avidin is not known. Forms a strong non-covalent specific complex with biotin (one molecule of biotin per subunit of avidin). The chain is Avidin (AVD) from Gallus gallus (Chicken).